Here is a 127-residue protein sequence, read N- to C-terminus: Protein pkiA (127 aa).

The HIT domain maps to 16–127 (IFAKIISGAI…GGRQMNWPPG (112 aa)).

The chain is Protein pkiA (pkiA) from Dictyostelium discoideum (Social amoeba).